The following is a 61-amino-acid chain: Large ribosomal subunit protein uL30 (61 aa).

This sequence belongs to the universal ribosomal protein uL30 family. In terms of assembly, part of the 50S ribosomal subunit.

In Thermosipho africanus (strain TCF52B), this protein is Large ribosomal subunit protein uL30.